A 474-amino-acid chain; its full sequence is Citrate synthase 4, mitochondrial (474 aa).

A mitochondrion-targeting transit peptide spans 1 to 16; the sequence is MVFFRSVSAFTRLRSR. Residues His-308, His-354, and Asp-409 contribute to the active site.

Belongs to the citrate synthase family. In terms of assembly, homodimer.

It is found in the mitochondrion matrix. It catalyses the reaction oxaloacetate + acetyl-CoA + H2O = citrate + CoA + H(+). It participates in carbohydrate metabolism; tricarboxylic acid cycle; isocitrate from oxaloacetate: step 1/2. This Arabidopsis thaliana (Mouse-ear cress) protein is Citrate synthase 4, mitochondrial (CSY4).